A 275-amino-acid chain; its full sequence is NH(3)-dependent NAD(+) synthetase (275 aa).

50–57 is a binding site for ATP; that stretch reads GISGGVDS. Asp-56 is a Mg(2+) binding site. Arg-147 is a deamido-NAD(+) binding site. Thr-167 serves as a coordination point for ATP. Glu-172 lines the Mg(2+) pocket. Deamido-NAD(+) contacts are provided by Lys-180 and Asp-187. 2 residues coordinate ATP: Lys-196 and Thr-218. 267 to 268 provides a ligand contact to deamido-NAD(+); the sequence is HK.

It belongs to the NAD synthetase family. In terms of assembly, homodimer.

It carries out the reaction deamido-NAD(+) + NH4(+) + ATP = AMP + diphosphate + NAD(+) + H(+). Its pathway is cofactor biosynthesis; NAD(+) biosynthesis; NAD(+) from deamido-NAD(+) (ammonia route): step 1/1. Catalyzes the ATP-dependent amidation of deamido-NAD to form NAD. Uses ammonia as a nitrogen source. The chain is NH(3)-dependent NAD(+) synthetase from Stutzerimonas stutzeri (strain A1501) (Pseudomonas stutzeri).